The chain runs to 518 residues: Putative malate dehydrogenase 1B (518 aa).

The protein belongs to the LDH/MDH superfamily. MDH type 2 family.

The protein is Putative malate dehydrogenase 1B (MDH1B) of Homo sapiens (Human).